We begin with the raw amino-acid sequence, 407 residues long: Protein FAM53B (407 aa).

Disordered regions lie at residues 204–286 (SSSM…RPSL) and 306–380 (ITGE…DTEP). Basic and acidic residues-rich tracts occupy residues 264-281 (LNEKKIGVKRRRPDDTHK) and 327-339 (DAVDSPAHEHNLK). A Nuclear localization signal motif is present at residues 272–275 (KRRR). The segment covering 357 to 369 (ITEEVDWNCDDGT) has biased composition (acidic residues).

Belongs to the FAM53 family. Interacts with ctnnb1. In terms of tissue distribution, predominantly expressed in proliferating cells throughout embryonic development.

It localises to the nucleus. In terms of biological role, acts as a regulator of Wnt signaling pathway by regulating beta-catenin (ctnnb1) nuclear localization. The protein is Protein FAM53B of Oryzias latipes (Japanese rice fish).